Reading from the N-terminus, the 919-residue chain is PAX3- and PAX7-binding protein 1 (919 aa).

The segment covering 1–11 has biased composition (basic residues); sequence MFRKARRVNVR. 3 disordered regions span residues 1–120, 151–206, and 237–277; these read MFRK…ENEE, KTEL…GGAF, and AREL…RIVF. A Phosphoserine modification is found at S16. Positions 16-28 are enriched in acidic residues; the sequence is SEEEERERDEEQE. Residues 49-59 are compositionally biased toward low complexity; sequence RAPAGESLLGP. The span at 75 to 87 shows a compositional bias: gly residues; sequence AEAGGGISGGAEP. A Glycyl lysine isopeptide (Lys-Gly) (interchain with G-Cter in SUMO1); alternate cross-link involves residue K151. A Glycyl lysine isopeptide (Lys-Gly) (interchain with G-Cter in SUMO2); alternate cross-link involves residue K151. S160 is subject to Phosphoserine. Basic and acidic residues predominate over residues 163–174; that stretch reads PLDKTCHAKDTN. Positions 185 to 195 are enriched in acidic residues; it reads GEDEMDMESEK. Residue S193 is modified to Phosphoserine. Over residues 237-258 the composition is skewed to basic and acidic residues; it reads ARELGDFTPHDSEPGKGRLVRE. A compositionally biased stretch (acidic residues) spans 259-270; that stretch reads DENDASDDEDDD. A phosphoserine mark is found at S264, S297, S559, and S560. The interval 380–560 is necessary and sufficient for interaction with PAX7; it reads TPSNEMAPVT…MADHLEGLSS (181 aa). The segment at 533-566 is disordered; that stretch reads EREARRTRRRQAREQTGQMADHLEGLSSDDEETS. T565 is subject to Phosphothreonine.

It belongs to the GCF family. In terms of assembly, interacts with PAX3 and PAX7. Interacts with WDR5; associates with a histone methyltransferase (HMT) complex composed at least of RBBP5, ASH2L, SET1, SET2 and KMT2A/MLL1, KMT2D/MLL2, KMT2C/MLL3 and KMT2B/MLL4 through direct interaction with WDR5. As to expression, ubiquitously expressed in all tissues tested including skeletal muscle. Expressed in primary myoblasts.

Its subcellular location is the nucleus. Its function is as follows. Adapter protein linking the transcription factors PAX3 and PAX7 to the histone methylation machinery and involved in myogenesis. Associates with a histone methyltransferase complex that specifically mediates dimethylation and trimethylation of 'Lys-4' of histone H3. Mediates the recruitment of that complex to the transcription factors PAX3 and PAX7 on chromatin to regulate the expression of genes involved in muscle progenitor cells proliferation including ID3 and CDC20. The chain is PAX3- and PAX7-binding protein 1 (Paxbp1) from Mus musculus (Mouse).